Here is a 505-residue protein sequence, read N- to C-terminus: MTEQKYVVALDQGTTSSRAVVLDHDANIVSVSQREFTQIYPQAGWVEHDPMEIYATQSSTLVEALGKAGIRSDEVAAIGITNQRETTVVWNKETGKPVYNAIVWQCRRTAAICEELKERGLESYIRDNTGLVLDPYFSGTKIKWILDNVEGAREQAEAGQLLFGTVDTWLVWKMTQGRVHVTDYTNASRTMLFNINTLQWDEKILAEFNIPLSMMPEVKKSSEVYGQTNIGGKGGTRIPIAGIAGDQQAALYGQMCVQAGQAKNTYGTGCFLLMNTGQEKVTSHNGLLTTLACGPRGEPAYALEGAVFMGGASIQWLRDELKLISDARDSEYFATKVDTSNGVYVVPAFTGLGAPYWDAYARGTIVGLTRGVNSNHIIRATLESIAYQTRDVLDAMQADSGIKLSALRVDGGAVANNFLMQFQADVLDTEVHRPKVTEVTALGAAYLAGLAVGFWDGLEELQGKAEIDRSFKPHHDEEKRQRRYKGWKRAVKCAQAWAVLHNEEE.

Position 14 (Thr14) interacts with ADP. Thr14, Thr15, and Ser16 together coordinate ATP. Residue Thr14 coordinates sn-glycerol 3-phosphate. An ADP-binding site is contributed by Arg18. Positions 84, 85, 136, and 246 each coordinate sn-glycerol 3-phosphate. Positions 84, 85, 136, 246, and 247 each coordinate glycerol. 2 residues coordinate ADP: Thr268 and Gly311. The ATP site is built by Thr268, Gly311, Gln315, and Gly412. Positions 412 and 416 each coordinate ADP.

The protein belongs to the FGGY kinase family.

It carries out the reaction glycerol + ATP = sn-glycerol 3-phosphate + ADP + H(+). It participates in polyol metabolism; glycerol degradation via glycerol kinase pathway; sn-glycerol 3-phosphate from glycerol: step 1/1. Inhibited by fructose 1,6-bisphosphate (FBP). Its function is as follows. Key enzyme in the regulation of glycerol uptake and metabolism. Catalyzes the phosphorylation of glycerol to yield sn-glycerol 3-phosphate. The protein is Glycerol kinase of Vibrio cholerae serotype O1 (strain ATCC 39315 / El Tor Inaba N16961).